Reading from the N-terminus, the 486-residue chain is NADH-quinone oxidoreductase subunit N (486 aa).

A run of 14 helical transmembrane segments spans residues 8–28, 38–58, 73–93, 105–125, 128–148, 169–189, 196–216, 235–255, 269–289, 304–324, 325–345, 373–393, 405–427, and 454–474; these read FIAL…MLAV, ATLS…VLGV, ACFY…LAHA, LYLL…AQHL, LFIG…YAFF, FLLF…FAGL, HVLS…GLGF, PAPV…AVLL, LLNI…NLLA, IAHL…AVEA, VGVY…VITL, AVMT…GFIG, HLWW…YLRV, and IMLV…QPLL.

It belongs to the complex I subunit 2 family. In terms of assembly, NDH-1 is composed of 13 different subunits. Subunits NuoA, H, J, K, L, M, N constitute the membrane sector of the complex.

Its subcellular location is the cell inner membrane. The catalysed reaction is a quinone + NADH + 5 H(+)(in) = a quinol + NAD(+) + 4 H(+)(out). Its function is as follows. NDH-1 shuttles electrons from NADH, via FMN and iron-sulfur (Fe-S) centers, to quinones in the respiratory chain. The immediate electron acceptor for the enzyme in this species is believed to be ubiquinone. Couples the redox reaction to proton translocation (for every two electrons transferred, four hydrogen ions are translocated across the cytoplasmic membrane), and thus conserves the redox energy in a proton gradient. The sequence is that of NADH-quinone oxidoreductase subunit N from Pseudomonas aeruginosa (strain ATCC 15692 / DSM 22644 / CIP 104116 / JCM 14847 / LMG 12228 / 1C / PRS 101 / PAO1).